The chain runs to 493 residues: tRNA(Ile)-lysidine synthase (493 aa).

26–31 contacts ATP; it reads SGGSDS.

The protein belongs to the tRNA(Ile)-lysidine synthase family.

It localises to the cytoplasm. The catalysed reaction is cytidine(34) in tRNA(Ile2) + L-lysine + ATP = lysidine(34) in tRNA(Ile2) + AMP + diphosphate + H(+). In terms of biological role, ligates lysine onto the cytidine present at position 34 of the AUA codon-specific tRNA(Ile) that contains the anticodon CAU, in an ATP-dependent manner. Cytidine is converted to lysidine, thus changing the amino acid specificity of the tRNA from methionine to isoleucine. This chain is tRNA(Ile)-lysidine synthase, found in Bartonella henselae (strain ATCC 49882 / DSM 28221 / CCUG 30454 / Houston 1) (Rochalimaea henselae).